We begin with the raw amino-acid sequence, 150 residues long: D-aminoacyl-tRNA deacylase (150 aa).

The Gly-cisPro motif, important for rejection of L-amino acids signature appears at 133–134 (GP).

Belongs to the DTD family. Homodimer.

The protein resides in the cytoplasm. It catalyses the reaction glycyl-tRNA(Ala) + H2O = tRNA(Ala) + glycine + H(+). The enzyme catalyses a D-aminoacyl-tRNA + H2O = a tRNA + a D-alpha-amino acid + H(+). Functionally, an aminoacyl-tRNA editing enzyme that deacylates mischarged D-aminoacyl-tRNAs. Also deacylates mischarged glycyl-tRNA(Ala), protecting cells against glycine mischarging by AlaRS. Acts via tRNA-based rather than protein-based catalysis; rejects L-amino acids rather than detecting D-amino acids in the active site. By recycling D-aminoacyl-tRNA to D-amino acids and free tRNA molecules, this enzyme counteracts the toxicity associated with the formation of D-aminoacyl-tRNA entities in vivo and helps enforce protein L-homochirality. This is D-aminoacyl-tRNA deacylase from Kocuria rhizophila (strain ATCC 9341 / DSM 348 / NBRC 103217 / DC2201).